The sequence spans 289 residues: Urease accessory protein UreD (289 aa).

This sequence belongs to the UreD family. In terms of assembly, ureD, UreF and UreG form a complex that acts as a GTP-hydrolysis-dependent molecular chaperone, activating the urease apoprotein by helping to assemble the nickel containing metallocenter of UreC. The UreE protein probably delivers the nickel.

The protein localises to the cytoplasm. Functionally, required for maturation of urease via the functional incorporation of the urease nickel metallocenter. In Magnetococcus marinus (strain ATCC BAA-1437 / JCM 17883 / MC-1), this protein is Urease accessory protein UreD.